Consider the following 156-residue polypeptide: MQIQLLAVGTKMPTWVTEGFNEYKKRFPADCKLVLHEIAAQKRTRKADLNRVMQQEGKSLLQAIPKGNRIVTLEVKGQAWDTPKLAQQLEKWQMDGRDVTLLIGGPEGLSDECLAAAEQRWSLSKLTLPHPVVRLIVAESLYRAWSLNNNHPYHRE.

S-adenosyl-L-methionine-binding positions include leucine 73, glycine 104, and 123–128; that span reads LSKLTL.

It belongs to the RNA methyltransferase RlmH family. As to quaternary structure, homodimer.

Its subcellular location is the cytoplasm. The catalysed reaction is pseudouridine(1915) in 23S rRNA + S-adenosyl-L-methionine = N(3)-methylpseudouridine(1915) in 23S rRNA + S-adenosyl-L-homocysteine + H(+). In terms of biological role, specifically methylates the pseudouridine at position 1915 (m3Psi1915) in 23S rRNA. The chain is Ribosomal RNA large subunit methyltransferase H from Idiomarina loihiensis (strain ATCC BAA-735 / DSM 15497 / L2-TR).